The sequence spans 307 residues: MLTIPEGILLCFITSGSVLGVLGNGFILHVNCTDCVRQKFSTTGFIFTGLAISRICVICIIISDGYLKLFSPHMVASDAHIIGISYLWIITNHTSTCFATILNLFYFLKIANFSHYIFFCLKRKLNTIFIFLLGCLFISWSVAFPQTVKIFNDKMKHRNTSWKFHLHKSKFIINHILLNLGVIFFCMVAIITSFLLIISLWKHNRKMQLYVSRFKSLNTEVHLKVMKVLISFIILLILHVIGILIETLSFLRYENKLLLILGLNFSSMYPCCHSFILILANNQLKQASLKALKQFKCHKKDKDVRET.

Residues 1-7 are Extracellular-facing; that stretch reads MLTIPEG. A helical membrane pass occupies residues 8 to 28; that stretch reads ILLCFITSGSVLGVLGNGFIL. The Cytoplasmic portion of the chain corresponds to 29–41; the sequence is HVNCTDCVRQKFS. Residues 42-62 traverse the membrane as a helical segment; it reads TTGFIFTGLAISRICVICIII. Residues 63–81 are Extracellular-facing; that stretch reads SDGYLKLFSPHMVASDAHI. Residues 82–104 traverse the membrane as a helical segment; that stretch reads IGISYLWIITNHTSTCFATILNL. The Cytoplasmic segment spans residues 105–124; it reads FYFLKIANFSHYIFFCLKRK. A helical transmembrane segment spans residues 125–145; the sequence is LNTIFIFLLGCLFISWSVAFP. The Extracellular portion of the chain corresponds to 146-179; it reads QTVKIFNDKMKHRNTSWKFHLHKSKFIINHILLN. N-linked (GlcNAc...) asparagine glycosylation is present at Asn-159. The chain crosses the membrane as a helical span at residues 180–200; that stretch reads LGVIFFCMVAIITSFLLIISL. The Cytoplasmic portion of the chain corresponds to 201-227; sequence WKHNRKMQLYVSRFKSLNTEVHLKVMK. The helical transmembrane segment at 228-248 threads the bilayer; it reads VLISFIILLILHVIGILIETL. Residues 249–257 are Extracellular-facing; it reads SFLRYENKL. The helical transmembrane segment at 258-278 threads the bilayer; that stretch reads LLILGLNFSSMYPCCHSFILI. The Cytoplasmic portion of the chain corresponds to 279–307; it reads LANNQLKQASLKALKQFKCHKKDKDVRET.

The protein belongs to the G-protein coupled receptor T2R family.

Its subcellular location is the membrane. Putative taste receptor which may play a role in the perception of bitterness. In Rattus norvegicus (Rat), this protein is Taste receptor type 2 member 106.